Here is a 210-residue protein sequence, read N- to C-terminus: Large ribosomal subunit protein uL3 (210 aa).

It belongs to the universal ribosomal protein uL3 family. As to quaternary structure, part of the 50S ribosomal subunit. Forms a cluster with proteins L14 and L19.

Functionally, one of the primary rRNA binding proteins, it binds directly near the 3'-end of the 23S rRNA, where it nucleates assembly of the 50S subunit. In Amoebophilus asiaticus (strain 5a2), this protein is Large ribosomal subunit protein uL3.